The primary structure comprises 1221 residues: DNA-directed RNA polymerase subunit beta (1221 aa).

The tract at residues 1176–1221 (EKKKLAEEEAEIAAEAEAEGSAEGDAAEADADANEAETADDDKASK) is disordered. Residues 1183-1215 (EEAEIAAEAEAEGSAEGDAAEADADANEAETAD) are compositionally biased toward acidic residues.

The protein belongs to the RNA polymerase beta chain family. In terms of assembly, the RNAP catalytic core consists of 2 alpha, 1 beta, 1 beta' and 1 omega subunit. When a sigma factor is associated with the core the holoenzyme is formed, which can initiate transcription.

The enzyme catalyses RNA(n) + a ribonucleoside 5'-triphosphate = RNA(n+1) + diphosphate. DNA-dependent RNA polymerase catalyzes the transcription of DNA into RNA using the four ribonucleoside triphosphates as substrates. The chain is DNA-directed RNA polymerase subunit beta from Lactobacillus delbrueckii subsp. bulgaricus (strain ATCC 11842 / DSM 20081 / BCRC 10696 / JCM 1002 / NBRC 13953 / NCIMB 11778 / NCTC 12712 / WDCM 00102 / Lb 14).